A 1251-amino-acid polypeptide reads, in one-letter code: Insulin receptor substrate 1 (1251 aa).

Serine 3 is modified (phosphoserine). Positions 3 to 137 are mediates interaction with PHIP; sequence SPPESDGFSD…GAGGGGGSCS (135 aa). The region spanning 12–115 is the PH domain; that stretch reads DVRKVGYLRK…WYQALLQLHN (104 aa). Serine 99 carries the phosphoserine; by CK2 modification. Residues 160 to 264 form the IRS-type PTB domain; sequence FKEVWQVILK…EAMRAMSDEF (105 aa). Residues 262 to 430 are disordered; sequence DEFRPRSKSQ…SDGGFISSDE (169 aa). Low complexity predominate over residues 269-281; that stretch reads KSQSSSNCSNPIS. Serine 270 is subject to Phosphoserine. Serine 307 carries the phosphoserine; by RPS6KB1 modification. Serine 312 is modified (phosphoserine; by IKKB, MAPK8 and RPS6KB1). Residues serine 323, serine 330, serine 345, and serine 348 each carry the phosphoserine modification. Over residues 354–363 the composition is skewed to basic residues; the sequence is THAHRHRGSA. Composition is skewed to low complexity over residues 383-404 and 412-424; these read SPSATSPVSLSSSSTSGHGSTS and SSASVSGSPSDGG. Position 419 is a phosphoserine (serine 419). Residues threonine 446 and threonine 453 each carry the phosphothreonine modification. Position 465 is a phosphotyrosine; by INSR (tyrosine 465). Residues 465–468 carry the YXXM motif 1 motif; it reads YICM. The tract at residues 494–513 is disordered; it reads YTPGTGLGTSPALAGDEASS. Serine 527 carries the post-translational modification Phosphoserine; by RPS6KB1. Positions 551-554 match the YXXM motif 2 motif; that stretch reads YTEM. Basic and acidic residues predominate over residues 594 to 610; the sequence is RRGGHHRPDSSTLHTDD. The interval 594–616 is disordered; it reads RRGGHHRPDSSTLHTDDGYMPMS. Phosphotyrosine; by INSR is present on tyrosine 612. The short motif at 612-615 is the YXXM motif 3 element; it reads YMPM. Serine 629 is modified (phosphoserine). Tyrosine 632 carries the post-translational modification Phosphotyrosine; by INSR. Residues 632-635 carry the YXXM motif 4 motif; that stretch reads YMPM. Serine 636 is modified (phosphoserine; by RPS6KB1). Tyrosine 662 carries the phosphotyrosine modification. Positions 662 to 665 match the YXXM motif 5 motif; that stretch reads YMMM. The tract at residues 668 to 692 is disordered; sequence SGGCSPDIGGGPSSSSSSTVPSGSS. The short motif at 730 to 733 is the YXXM motif 6 element; it reads YMNM. 2 disordered regions span residues 734–753 and 769–946; these read SPVGDSNTSSPSDCYYGPED and FKHT…EETG. Basic and acidic residues predominate over residues 774–783; it reads RPGEPEEGAR. Position 792 is a phosphoserine; by AMPK and SIK2 (serine 792). Composition is skewed to low complexity over residues 799–813 and 875–891; these read AATADDSSSSTSSDS and QQQQQQQQQQQQQQQQQ. A Phosphoserine modification is found at serine 901. Tyrosine 905 is subject to Phosphotyrosine; by INSR. Residues 905–907 are GRB2-binding; sequence YVN. Positions 924-937 are enriched in polar residues; sequence SRSSPSVRCPSQLQ. Phosphotyrosine; by INSR occurs at positions 950 and 998. 3 short sequence motifs (YXXM motif) span residues 950–953, 998–1001, and 1021–1024; these read YMKM, YMTM, and YADM. 2 disordered regions span residues 1091 to 1124 and 1130 to 1149; these read NQSAKVIRADPQGCRRRHSSETFSSTPSATRVGN and AGAAIGGSGGSSSSSEDVKR. Residues serine 1109 and serine 1110 each carry the phosphoserine modification. Residues 1111–1123 show a composition bias toward polar residues; that stretch reads ETFSSTPSATRVG. Phosphotyrosine; by INSR is present on tyrosine 1188. A Glycyl lysine isopeptide (Lys-Gly) (interchain with G-Cter in ubiquitin) cross-link involves residue lysine 1195. The disordered stretch occupies residues 1195–1251; that stretch reads KDFKQRPQECTPQPQPPPPPPPHQPLGSSESSSTRRSSEDLSAYASISFQKQPEDLQ. Pro residues predominate over residues 1207-1218; that stretch reads QPQPPPPPPPHQ. Residue tyrosine 1238 is modified to Phosphotyrosine; by INSR.

As to quaternary structure, interacts with UBTF and PIK3CA. Interacts (via phosphorylated YXXM motifs) with PIK3R1. Interacts with ROCK1 and FER. Interacts (via PH domain) with PHIP. Interacts with GRB2. Interacts with SOCS7. Interacts (via IRS-type PTB domain) with IGF1R and INSR (via the tyrosine-phosphorylated NPXY motif). Interacts with ALK. Interacts with EIF2AK2/PKR. Interacts with GKAP1. Interacts with DGKZ in the absence of insulin; insulin stimulation decreases this interaction. Found in a ternary complex with DGKZ and PIP5K1A in the absence of insulin stimulation. Interacts with SQSTM1; the interaction is disrupted by the presence of tensin TNS2. Interacts with NCK1 (via SH2 domain). Interacts with NCK2 (via SH3 domain). Interacts with SH2B1; this interaction enhances leptin-induced activation of the PI3-kinase pathway. Interacts with DVL2; this interaction promotes the Wnt/beta-catenin signaling pathway. Interacts with JAK1. In terms of processing, serine phosphorylation of IRS1 is a mechanism for insulin resistance. Ser-312 phosphorylation inhibits insulin action through disruption of IRS1 interaction with the insulin receptor. Phosphorylation of Tyr-905 is required for GRB2-binding. Phosphorylated by ALK. Phosphorylated at Ser-270, Ser-307, Ser-636 and Ser-1109 by RPS6KB1; phosphorylation induces accelerated degradation of IRS1. Phosphorylated on tyrosine residues in response to insulin. In skeletal muscles, dephosphorylated on Tyr-612 by TNS2 under anabolic conditions; dephosphorylation results in the proteasomal degradation of IRS1. Post-translationally, ubiquitinated by the Cul7-RING(FBXW8) complex in a mTOR-dependent manner, leading to its degradation: the Cul7-RING(FBXW8) complex recognizes and binds IRS1 previously phosphorylated by S6 kinase (RPS6KB1 or RPS6KB2). Ubiquitinated by TRAF4 through 'Lys-29' linkage; this ubiquitination regulates the interaction of IRS1 with IGFR and IRS1 tyrosine phosphorylation upon IGF1 stimulation. S-nitrosylation at by BLVRB inhibits its activity.

The protein localises to the cytoplasm. The protein resides in the nucleus. Its function is as follows. Signaling adapter protein that participates in the signal transduction from two prominent receptor tyrosine kinases, insulin receptor/INSR and insulin-like growth factor I receptor/IGF1R. Plays therefore an important role in development, growth, glucose homeostasis as well as lipid metabolism. Upon phosphorylation by the insulin receptor, functions as a signaling scaffold that propagates insulin action through binding to SH2 domain-containing proteins including the p85 regulatory subunit of PI3K, NCK1, NCK2, GRB2 or SHP2. Recruitment of GRB2 leads to the activation of the guanine nucleotide exchange factor SOS1 which in turn triggers the Ras/Raf/MEK/MAPK signaling cascade. Activation of the PI3K/AKT pathway is responsible for most of insulin metabolic effects in the cell, and the Ras/Raf/MEK/MAPK is involved in the regulation of gene expression and in cooperation with the PI3K pathway regulates cell growth and differentiation. Acts a positive regulator of the Wnt/beta-catenin signaling pathway through suppression of DVL2 autophagy-mediated degradation leading to cell proliferation. The chain is Insulin receptor substrate 1 (IRS1) from Chlorocebus aethiops (Green monkey).